Consider the following 472-residue polypeptide: Siroheme synthase 1 (472 aa).

Positions 1–203 (MDYLPLFADL…GQLAQAEEEL (203 aa)) are precorrin-2 dehydrogenase /sirohydrochlorin ferrochelatase. NAD(+) contacts are provided by residues 22–23 (EV) and 43–44 (QT). Ser-128 carries the phosphoserine modification. The segment at 215–472 (GEVALVGAGP…AISPSVVNLA (258 aa)) is uroporphyrinogen-III C-methyltransferase. S-adenosyl-L-methionine is bound at residue Pro-224. Asp-247 (proton acceptor) is an active-site residue. Lys-269 functions as the Proton donor in the catalytic mechanism. Residues 300–302 (GGD), Ile-305, 330–331 (TA), Met-382, and Gly-411 each bind S-adenosyl-L-methionine.

This sequence in the N-terminal section; belongs to the precorrin-2 dehydrogenase / sirohydrochlorin ferrochelatase family. In the C-terminal section; belongs to the precorrin methyltransferase family.

It catalyses the reaction uroporphyrinogen III + 2 S-adenosyl-L-methionine = precorrin-2 + 2 S-adenosyl-L-homocysteine + H(+). The enzyme catalyses precorrin-2 + NAD(+) = sirohydrochlorin + NADH + 2 H(+). It carries out the reaction siroheme + 2 H(+) = sirohydrochlorin + Fe(2+). It participates in cofactor biosynthesis; adenosylcobalamin biosynthesis; precorrin-2 from uroporphyrinogen III: step 1/1. Its pathway is cofactor biosynthesis; adenosylcobalamin biosynthesis; sirohydrochlorin from precorrin-2: step 1/1. The protein operates within porphyrin-containing compound metabolism; siroheme biosynthesis; precorrin-2 from uroporphyrinogen III: step 1/1. It functions in the pathway porphyrin-containing compound metabolism; siroheme biosynthesis; siroheme from sirohydrochlorin: step 1/1. It participates in porphyrin-containing compound metabolism; siroheme biosynthesis; sirohydrochlorin from precorrin-2: step 1/1. Multifunctional enzyme that catalyzes the SAM-dependent methylations of uroporphyrinogen III at position C-2 and C-7 to form precorrin-2 via precorrin-1. Then it catalyzes the NAD-dependent ring dehydrogenation of precorrin-2 to yield sirohydrochlorin. Finally, it catalyzes the ferrochelation of sirohydrochlorin to yield siroheme. This is Siroheme synthase 1 from Yersinia enterocolitica serotype O:8 / biotype 1B (strain NCTC 13174 / 8081).